The primary structure comprises 253 residues: Tryptophan synthase alpha chain (253 aa).

Active-site proton acceptor residues include Glu-47 and Asp-58.

The protein belongs to the TrpA family. As to quaternary structure, tetramer of two alpha and two beta chains.

The catalysed reaction is (1S,2R)-1-C-(indol-3-yl)glycerol 3-phosphate + L-serine = D-glyceraldehyde 3-phosphate + L-tryptophan + H2O. The protein operates within amino-acid biosynthesis; L-tryptophan biosynthesis; L-tryptophan from chorismate: step 5/5. In terms of biological role, the alpha subunit is responsible for the aldol cleavage of indoleglycerol phosphate to indole and glyceraldehyde 3-phosphate. In Lactococcus lactis subsp. cremoris (strain SK11), this protein is Tryptophan synthase alpha chain.